A 274-amino-acid polypeptide reads, in one-letter code: NAD(P)H-quinone oxidoreductase subunit K, chloroplastic (274 aa).

2 stretches are compositionally biased toward polar residues: residues 1–10 (MVINQKNLSS) and 18–27 (SGSQSSTKAD). The disordered stretch occupies residues 1 to 27 (MVINQKNLSSPVAPYDKSGSQSSTKAD). Residues cysteine 90, cysteine 91, cysteine 155, and cysteine 186 each coordinate [4Fe-4S] cluster.

Belongs to the complex I 20 kDa subunit family. NDH is composed of at least 16 different subunits, 5 of which are encoded in the nucleus. It depends on [4Fe-4S] cluster as a cofactor.

It is found in the plastid. The protein localises to the chloroplast thylakoid membrane. It catalyses the reaction a plastoquinone + NADH + (n+1) H(+)(in) = a plastoquinol + NAD(+) + n H(+)(out). The catalysed reaction is a plastoquinone + NADPH + (n+1) H(+)(in) = a plastoquinol + NADP(+) + n H(+)(out). In terms of biological role, NDH shuttles electrons from NAD(P)H:plastoquinone, via FMN and iron-sulfur (Fe-S) centers, to quinones in the photosynthetic chain and possibly in a chloroplast respiratory chain. The immediate electron acceptor for the enzyme in this species is believed to be plastoquinone. Couples the redox reaction to proton translocation, and thus conserves the redox energy in a proton gradient. In Chlorokybus atmophyticus (Soil alga), this protein is NAD(P)H-quinone oxidoreductase subunit K, chloroplastic.